The chain runs to 345 residues: Phosphoribosylformylglycinamidine cyclo-ligase (345 aa).

The protein belongs to the AIR synthase family.

The protein resides in the cytoplasm. The catalysed reaction is 2-formamido-N(1)-(5-O-phospho-beta-D-ribosyl)acetamidine + ATP = 5-amino-1-(5-phospho-beta-D-ribosyl)imidazole + ADP + phosphate + H(+). Its pathway is purine metabolism; IMP biosynthesis via de novo pathway; 5-amino-1-(5-phospho-D-ribosyl)imidazole from N(2)-formyl-N(1)-(5-phospho-D-ribosyl)glycinamide: step 2/2. The sequence is that of Phosphoribosylformylglycinamidine cyclo-ligase from Enterobacter sp. (strain 638).